Here is a 692-residue protein sequence, read N- to C-terminus: Polyribonucleotide nucleotidyltransferase (692 aa).

Mg(2+) is bound by residues D484 and D490. The region spanning 551 to 610 (PRIITIQINPDRIRDVIGPGGKVIRALTEETGATIDIQDNGTVTIASVDGEAGAAAKRRI) is the KH domain. One can recognise an S1 motif domain in the interval 620-688 (DTIYDGKVAK…RQGKIKLSMK (69 aa)).

It belongs to the polyribonucleotide nucleotidyltransferase family. In terms of assembly, component of the RNA degradosome, which is a multiprotein complex involved in RNA processing and mRNA degradation. It depends on Mg(2+) as a cofactor.

It is found in the cytoplasm. It carries out the reaction RNA(n+1) + phosphate = RNA(n) + a ribonucleoside 5'-diphosphate. Functionally, involved in mRNA degradation. Catalyzes the phosphorolysis of single-stranded polyribonucleotides processively in the 3'- to 5'-direction. The polypeptide is Polyribonucleotide nucleotidyltransferase (Acidithiobacillus ferrooxidans (strain ATCC 53993 / BNL-5-31) (Leptospirillum ferrooxidans (ATCC 53993))).